Here is a 281-residue protein sequence, read N- to C-terminus: Microtubule-associated protein RP/EB family member 3 (281 aa).

The 103-residue stretch at 14-116 (NLSRHDMLAW…FIQWFKKFFD (103 aa)) folds into the Calponin-homology (CH) domain. 2 disordered regions span residues 157-181 (VPQR…VAPP) and 260-281 (EGFA…QDEY). Positions 158 to 175 (PQRTSPTGPKNMQTSGRL) are enriched in polar residues. Phosphoserine occurs at positions 162 and 176. Residues 194–264 (GGHEADAQIL…LYATEEGFAP (71 aa)) form the EB1 C-terminal domain. Residues 217 to 260 (DGLEKERDFYFSKLRDIELICQEHESENSPVISGIIGILYATEE) are APC-binding. The segment at 217 to 281 (DGLEKERDFY…EHQQEDQDEY (65 aa)) is DCTN1-binding. Positions 272 to 281 (EHQQEDQDEY) are enriched in basic and acidic residues.

This sequence belongs to the MAPRE family. As to quaternary structure, homodimer. Heterodimer with MAPRE1. Binds monomeric and polymerized GTP-bound tubulin. Interacts with DCTN1 and SRCIN1. Binds to the C-terminal domain of APC. Interacts (via C-terminus) with CLIP1. Interacts with SLAIN2. Interacts with SLAIN1. Interacts with APC2. Interacts with AKAP9. Interacts with PDE4DIP isoform 2/MMG8/SMYLE; this interaction is required for its recruitment to the Golgi apparatus.

Its subcellular location is the cytoplasm. It is found in the cytoskeleton. Plus-end tracking protein (+TIP) that binds to the plus-end of microtubules and regulates the dynamics of the microtubule cytoskeleton. Promotes microtubule growth. May be involved in spindle function by stabilizing microtubules and anchoring them at centrosomes. Also acts as a regulator of minus-end microtubule organization: interacts with the complex formed by AKAP9 and PDE4DIP, leading to recruit CAMSAP2 to the Golgi apparatus, thereby tethering non-centrosomal minus-end microtubules to the Golgi, an important step for polarized cell movement. Promotes elongation of CAMSAP2-decorated microtubule stretches on the minus-end of microtubules. This chain is Microtubule-associated protein RP/EB family member 3 (Mapre3), found in Mus musculus (Mouse).